Here is a 265-residue protein sequence, read N- to C-terminus: 3-methyl-2-oxobutanoate hydroxymethyltransferase (265 aa).

2 residues coordinate Mg(2+): aspartate 44 and aspartate 83. Residues 44-45 (DS), aspartate 83, and lysine 113 contribute to the 3-methyl-2-oxobutanoate site. Residue glutamate 115 coordinates Mg(2+). Glutamate 183 functions as the Proton acceptor in the catalytic mechanism.

It belongs to the PanB family. Homodecamer; pentamer of dimers. Mg(2+) serves as cofactor.

Its subcellular location is the cytoplasm. It catalyses the reaction 3-methyl-2-oxobutanoate + (6R)-5,10-methylene-5,6,7,8-tetrahydrofolate + H2O = 2-dehydropantoate + (6S)-5,6,7,8-tetrahydrofolate. It participates in cofactor biosynthesis; (R)-pantothenate biosynthesis; (R)-pantoate from 3-methyl-2-oxobutanoate: step 1/2. Its function is as follows. Catalyzes the reversible reaction in which hydroxymethyl group from 5,10-methylenetetrahydrofolate is transferred onto alpha-ketoisovalerate to form ketopantoate. The polypeptide is 3-methyl-2-oxobutanoate hydroxymethyltransferase (Leptospira interrogans serogroup Icterohaemorrhagiae serovar copenhageni (strain Fiocruz L1-130)).